A 337-amino-acid chain; its full sequence is MTAAFSTLDEVRDILRALPESDAESIDDAAARNGQLTKPPGALGRLEALAIWYAGWRGVATPRIETPQIIVFAGNHGIAAQGVSAFPAEVTAQMVLNFQHGGAAINQLAATFGAKLDVHALALEQPTADFTQAPAMSEAEVIDALHTGWQAVDAAADVLIVGEMGIGNTTCAAALAAACFGGAPADWVGRGTGVDDAGLAIKQRVVAEGLARHATVHDGLEKLRCLGGREVAAMAGAILRARVLRIPVLLDGFICCAAAGSLMHTAPDALEHCVAGHLSAEGSHDRLLQAIGKPPLLSLGLRLGEASGAALSLAVLQGAVACLSGMATFAEAGVADG.

The Proton acceptor role is filled by E305.

The protein belongs to the CobT family.

The catalysed reaction is 5,6-dimethylbenzimidazole + nicotinate beta-D-ribonucleotide = alpha-ribazole 5'-phosphate + nicotinate + H(+). Its pathway is nucleoside biosynthesis; alpha-ribazole biosynthesis; alpha-ribazole from 5,6-dimethylbenzimidazole: step 1/2. Functionally, catalyzes the synthesis of alpha-ribazole-5'-phosphate from nicotinate mononucleotide (NAMN) and 5,6-dimethylbenzimidazole (DMB). This is Nicotinate-nucleotide--dimethylbenzimidazole phosphoribosyltransferase from Roseobacter denitrificans (strain ATCC 33942 / OCh 114) (Erythrobacter sp. (strain OCh 114)).